A 395-amino-acid chain; its full sequence is GPI-anchor transamidase (395 aa).

The N-terminal stretch at 1-27 (MAVTDSLSRAASTLAAVLLLSFGSVAA) is a signal peptide. Residues 28–368 (SHIEDQAEQF…PKLKDWHPPG (341 aa)) lie on the Lumenal side of the membrane. Positions 79, 82, 118, and 120 each coordinate Ca(2+). The active-site Proton donor is His164. Cys206 functions as the Nucleophile; acyl-thioester intermediate in the catalytic mechanism. Positions 206, 232, and 234 each coordinate a protein. The segment at 231–236 (DSLSHQ) is autoinhibitory loop. An intrachain disulfide couples Cys275 to Cys280. A helical transmembrane segment spans residues 369–385 (GFILGLWALIIMVFFKT). The Cytoplasmic segment spans residues 386 to 395 (YGIKHMKFIF).

Belongs to the peptidase C13 family. In terms of assembly, heteropentamer. Part of the GPI-anchor transamidase complex, consisting of PIGK, PIGT, PIGS, PIGU and GAA1. Interacts with GPAA1. Interacts with PIGT; this interaction, via a disulfide link, stabilizes the expression of GAA1 and PIGK and links them to PIGS. The disulfide bond between PIGK/GPI8 and PIGT is important for normal enzyme activity.

It is found in the endoplasmic reticulum membrane. It functions in the pathway glycolipid biosynthesis; glycosylphosphatidylinositol-anchor biosynthesis. In the absence of proproteins substrates, exists in an inactive state with a disrupted catalytic site by an autoinhibitory loop. The binding of proprotein substrates, particularly the CSP region, to GPI-T triggers concerted conformational changes that alleviate the inhibition by the autoinhibitory loop. Meanwhile, proprotein residues near the omega- site induce the formation of a catalytic cleft for catalysis, following which the products are released and GPI-T reverts to the inactive state. Its function is as follows. Catalytic subunit of the glycosylphosphatidylinositol-anchor (GPI-anchor) transamidase (GPI-T) complex that catalyzes the formation of the linkage between a proprotein and a GPI-anchor and participates in GPI anchored protein biosynthesis. Recognizes diverse proproteins at a C-terminal signal peptide (CSP) region that lacks consensus sequence and replaces it with a GPI-anchor via a transamidation reaction. Transamidation catalysis reaction follows a two-phase mechanism. In the acyl-enzyme phase, the carbonyl group of the proproteins's omega-site undergoes a nucleophilic attack forming an enzyme-substrate thioester bond. Followed by a general acid catalysis that allows CSP releasing, regenerating the carbonyl, and forming the acyl-enzyme intermediate. In the GPI-anchor attachment phase, the amino group of the GPI-anchor's ethanolamine phosphate, the one on third mannose (EtNP3), mediates a nucleophilic attack on the carbonyl of the acyl-enzyme intermediate, replacing the CSP, allowing GPI-anchor attachment to the omega-residue, therefore forming the product and freeing the enzyme. This is GPI-anchor transamidase from Pongo abelii (Sumatran orangutan).